A 58-amino-acid polypeptide reads, in one-letter code: Small ribosomal subunit protein bS21 (58 aa).

Residues 35 to 58 (REHYEKPSVKKKKKSEAARKRKFK) are disordered. Residues 43-58 (VKKKKKSEAARKRKFK) are compositionally biased toward basic residues.

This sequence belongs to the bacterial ribosomal protein bS21 family.

The protein is Small ribosomal subunit protein bS21 of Clostridium botulinum (strain Alaska E43 / Type E3).